The primary structure comprises 190 residues: NADH dehydrogenase [ubiquinone] iron-sulfur protein 3 (190 aa).

Belongs to the complex I 30 kDa subunit family. Complex I is composed of about 45 different subunits. This is a component of the iron-sulfur (IP) fragment of the enzyme.

The protein localises to the mitochondrion inner membrane. The catalysed reaction is a ubiquinone + NADH + 5 H(+)(in) = a ubiquinol + NAD(+) + 4 H(+)(out). Core subunit of the mitochondrial membrane respiratory chain NADH dehydrogenase (Complex I) that is believed to belong to the minimal assembly required for catalysis. Complex I functions in the transfer of electrons from NADH to the respiratory chain. The immediate electron acceptor for the enzyme is believed to be ubiquinone. This chain is NADH dehydrogenase [ubiquinone] iron-sulfur protein 3 (NAD9), found in Solanum tuberosum (Potato).